A 261-amino-acid polypeptide reads, in one-letter code: 4-hydroxy-tetrahydrodipicolinate reductase (261 aa).

NAD(+) is bound by residues 13–18 (GMAGRM), 91–93 (GTS), and 115–118 (APNF). Residue H149 is the Proton donor/acceptor of the active site. H150 is a binding site for (S)-2,3,4,5-tetrahydrodipicolinate. K153 acts as the Proton donor in catalysis. Position 159–160 (159–160 (GT)) interacts with (S)-2,3,4,5-tetrahydrodipicolinate.

The protein belongs to the DapB family.

It is found in the cytoplasm. It catalyses the reaction (S)-2,3,4,5-tetrahydrodipicolinate + NAD(+) + H2O = (2S,4S)-4-hydroxy-2,3,4,5-tetrahydrodipicolinate + NADH + H(+). The enzyme catalyses (S)-2,3,4,5-tetrahydrodipicolinate + NADP(+) + H2O = (2S,4S)-4-hydroxy-2,3,4,5-tetrahydrodipicolinate + NADPH + H(+). It participates in amino-acid biosynthesis; L-lysine biosynthesis via DAP pathway; (S)-tetrahydrodipicolinate from L-aspartate: step 4/4. Functionally, catalyzes the conversion of 4-hydroxy-tetrahydrodipicolinate (HTPA) to tetrahydrodipicolinate. The polypeptide is 4-hydroxy-tetrahydrodipicolinate reductase (Granulibacter bethesdensis (strain ATCC BAA-1260 / CGDNIH1)).